Reading from the N-terminus, the 58-residue chain is Ribosome modulation factor (58 aa).

The protein belongs to the ribosome modulation factor family.

The protein localises to the cytoplasm. In terms of biological role, during stationary phase, converts 70S ribosomes to an inactive dimeric form (100S ribosomes). This Shewanella amazonensis (strain ATCC BAA-1098 / SB2B) protein is Ribosome modulation factor.